Consider the following 449-residue polypeptide: Amidophosphoribosyltransferase (449 aa).

A propeptide spanning residues 1–9 (MRGEIMKEK) is cleaved from the precursor. The active-site Nucleophile is the Cys-10. In terms of domain architecture, Glutamine amidotransferase type-2 spans 10 to 224 (CGIFGAYSQD…PGEVIVVKDG (215 aa)). Cys-239 contacts [4Fe-4S] cluster. Mg(2+)-binding residues include Ser-286, Asp-346, and Asp-347. Residues Cys-383, Cys-432, and Cys-435 each coordinate [4Fe-4S] cluster.

In the C-terminal section; belongs to the purine/pyrimidine phosphoribosyltransferase family. It depends on Mg(2+) as a cofactor. The cofactor is [4Fe-4S] cluster.

It carries out the reaction 5-phospho-beta-D-ribosylamine + L-glutamate + diphosphate = 5-phospho-alpha-D-ribose 1-diphosphate + L-glutamine + H2O. It participates in purine metabolism; IMP biosynthesis via de novo pathway; N(1)-(5-phospho-D-ribosyl)glycinamide from 5-phospho-alpha-D-ribose 1-diphosphate: step 1/2. Catalyzes the formation of phosphoribosylamine from phosphoribosylpyrophosphate (PRPP) and glutamine. This is Amidophosphoribosyltransferase from Pyrococcus horikoshii (strain ATCC 700860 / DSM 12428 / JCM 9974 / NBRC 100139 / OT-3).